Here is a 172-residue protein sequence, read N- to C-terminus: Putative RNA polymerase II transcriptional coactivator (172 aa).

Disordered regions lie at residues 1 to 43 and 123 to 172; these read MPPK…QDGN and QTDA…DDDE. Residues 24-43 are compositionally biased toward polar residues; that stretch reads GNTGKAQPQELTKGSDQDGN. Residues 131 to 144 show a composition bias toward basic and acidic residues; the sequence is PKVKALESNKESIK. Residues 158 to 172 show a composition bias toward acidic residues; the sequence is TSDEEEAAEDEDDDE.

Belongs to the transcriptional coactivator PC4 family.

The protein localises to the nucleus. Its function is as follows. General coactivator that functions cooperatively with TAFs and mediates functional interactions between upstream activators and the general transcriptional machinery. Binds single-stranded DNA. This chain is Putative RNA polymerase II transcriptional coactivator, found in Neurospora crassa (strain ATCC 24698 / 74-OR23-1A / CBS 708.71 / DSM 1257 / FGSC 987).